Here is a 207-residue protein sequence, read N- to C-terminus: Urease accessory protein UreG (207 aa).

12–19 (GPVGAGKT) is a binding site for GTP.

Belongs to the SIMIBI class G3E GTPase family. UreG subfamily. Homodimer. UreD, UreF and UreG form a complex that acts as a GTP-hydrolysis-dependent molecular chaperone, activating the urease apoprotein by helping to assemble the nickel containing metallocenter of UreC. The UreE protein probably delivers the nickel.

It is found in the cytoplasm. Functionally, facilitates the functional incorporation of the urease nickel metallocenter. This process requires GTP hydrolysis, probably effectuated by UreG. The polypeptide is Urease accessory protein UreG (Cereibacter sphaeroides (strain ATCC 17025 / ATH 2.4.3) (Rhodobacter sphaeroides)).